The following is a 538-amino-acid chain: Atos homolog protein B (538 aa).

Disordered stretches follow at residues 1 to 103 (MRHV…GLVS), 130 to 149 (GSAT…PSSN), 163 to 185 (PDQG…QLHT), and 199 to 272 (KSPV…LGCP). A compositionally biased stretch (low complexity) spans 130-148 (GSATSSWTSGTQSTPWPSS). Positions 227 to 238 (HTPPGPGPPGPC) are enriched in pro residues. Residues Ser254 and Ser255 each carry the phosphoserine modification. A required for macropage invasion region spans residues 348 to 430 (LLGNFEESLL…VPKVGTIQVT (83 aa)). Residues 436–444 (QTVVKMFLV) form a transactivation domain 1 (TAD1) region.

It belongs to the ATOS family.

The protein resides in the nucleus. Functionally, transcription regulator that may syncronize transcriptional and translational programs. The protein is Atos homolog protein B of Rattus norvegicus (Rat).